Consider the following 420-residue polypeptide: Vacuolar amino acid transporter 5 (420 aa).

Topologically, residues 1-19 are cytoplasmic; that stretch reads MSGYSPLSSGPADVHIGKA. Residues 20 to 40 traverse the membrane as a helical segment; sequence GFFSSVINLANTILGAGILSL. Residues 41–49 are Vacuolar-facing; sequence PNAFTKTGL. The helical transmembrane segment at 50–70 threads the bilayer; the sequence is LFGCLTIVFSAFASFLGLYFV. Topologically, residues 71 to 96 are cytoplasmic; the sequence is SQCAARLPRGKASFAAVAKHTFPSLA. A helical transmembrane segment spans residues 97-117; the sequence is VVFDASIAVKCFGVAVSYLVI. The Vacuolar portion of the chain corresponds to 118 to 141; it reads VGDLMPQIAPSLGLSSPMFLRRQT. A helical transmembrane segment spans residues 142–162; sequence WIVFALFVLTPLSFLKRLDSL. Topologically, residues 163 to 166 are cytoplasmic; it reads RHTS. A helical membrane pass occupies residues 167 to 187; that stretch reads VISLIALCYLVFIVLYHFIIG. Residues 188 to 195 lie on the Vacuolar side of the membrane; sequence DTVKGEIR. A helical transmembrane segment spans residues 196 to 216; it reads YFVPESGFGYLSVLPVFVFGF. The Cytoplasmic segment spans residues 217–240; the sequence is TCHQNAFSVINEVRNFSQGFVNFT. A helical membrane pass occupies residues 241–261; it reads MFTAIISSTLLYLLVAITGYL. Residues 262–278 are Vacuolar-facing; that stretch reads SFGSLASGNIIAMYDNT. The helical transmembrane segment at 279–299 threads the bilayer; the sequence is SIWIIGGKLAIVVLVLFSYPL. At 300–326 the chain is on the cytoplasmic side; it reads QCHPCRNSVYQAIRRSYSAHDMSDGYH. A helical membrane pass occupies residues 327–347; sequence AVITLCILLFTHSLALLLSSL. The Vacuolar portion of the chain corresponds to 348-349; it reads EM. A helical transmembrane segment spans residues 350 to 370; sequence VLAFVGSTGSTFISFILPGSL. Residues 371–394 are Cytoplasmic-facing; that stretch reads YYFFSHKVASPGNSSPLQLRISRA. Residues 395-415 traverse the membrane as a helical segment; the sequence is FAAGLAIYGTVVMILCLNINI. The Vacuolar portion of the chain corresponds to 416-420; sequence AKLSH.

It belongs to the amino acid/polyamine transporter 2 family.

The protein localises to the vacuole membrane. In terms of biological role, vacuolar amino acid transporter involved in the vacuolar uptake of histidine, glutamate, tyrosine, arginine, lysine, and serine. Required for sporulation. This is Vacuolar amino acid transporter 5 (avt5) from Schizosaccharomyces pombe (strain 972 / ATCC 24843) (Fission yeast).